The sequence spans 371 residues: Alanine dehydrogenase (371 aa).

Substrate is bound by residues arginine 15 and lysine 74. Catalysis depends on histidine 95, which acts as the Proton donor/acceptor. Residues serine 133, 177–178, aspartate 197, serine 219, 238–239, 266–269, and 298–301 each bind NAD(+); these read QA, VL, IAID, and VANM. Aspartate 269 functions as the Proton donor/acceptor in the catalytic mechanism.

This sequence belongs to the AlaDH/PNT family. In terms of assembly, homohexamer. Trimer of dimer.

It carries out the reaction L-alanine + NAD(+) + H2O = pyruvate + NH4(+) + NADH + H(+). Its pathway is amino-acid degradation; L-alanine degradation via dehydrogenase pathway; NH(3) and pyruvate from L-alanine: step 1/1. Functionally, catalyzes the reversible reductive amination of pyruvate to L-alanine. May play a role in cell wall synthesis as L-alanine is an important constituent of the peptidoglycan layer. The sequence is that of Alanine dehydrogenase (ald) from Staphylococcus epidermidis (strain ATCC 35984 / DSM 28319 / BCRC 17069 / CCUG 31568 / BM 3577 / RP62A).